Here is a 256-residue protein sequence, read N- to C-terminus: Omega-amidase YafV (256 aa).

The 231-residue stretch at Leu-4–Met-234 folds into the CN hydrolase domain. Glu-42 acts as the Proton acceptor in catalysis. Lys-107 is a catalytic residue. Cys-141 serves as the catalytic Nucleophile.

Belongs to the carbon-nitrogen hydrolase superfamily. NIT1/NIT2 family.

It carries out the reaction a monoamide of a dicarboxylate + H2O = a dicarboxylate + NH4(+). Functionally, hydrolyzes alpha-ketoglutaramate (a-KGM) to alpha-ketoglutarate (alpha-KG) and ammonia (specific activity 6.65 umol/min/mg), has weak activity on L-glutamine, almost no activity on deaminated glutathione (dGSH) and none on glutathione. May function as a metabolite repair enzyme. The chain is Omega-amidase YafV (yafV) from Escherichia coli (strain B / BL21-DE3).